The following is a 439-amino-acid chain: tRNA modification GTPase MnmE (439 aa).

(6S)-5-formyl-5,6,7,8-tetrahydrofolate-binding residues include R24, E81, and K121. Residues 218 to 363 form the TrmE-type G domain; it reads GFKVVIAGAP…LRRLIGDIVE (146 aa). N228 serves as a coordination point for K(+). GTP is bound by residues 228–233, 247–253, and 272–275; these read NAGKSS, TEIAGTT, and DTAG. A Mg(2+)-binding site is contributed by S232. T247, I249, and T252 together coordinate K(+). T253 is a binding site for Mg(2+). K439 is a binding site for (6S)-5-formyl-5,6,7,8-tetrahydrofolate.

It belongs to the TRAFAC class TrmE-Era-EngA-EngB-Septin-like GTPase superfamily. TrmE GTPase family. As to quaternary structure, homodimer. Heterotetramer of two MnmE and two MnmG subunits. Requires K(+) as cofactor.

Its subcellular location is the cytoplasm. In terms of biological role, exhibits a very high intrinsic GTPase hydrolysis rate. Involved in the addition of a carboxymethylaminomethyl (cmnm) group at the wobble position (U34) of certain tRNAs, forming tRNA-cmnm(5)s(2)U34. The polypeptide is tRNA modification GTPase MnmE (Rhizobium johnstonii (strain DSM 114642 / LMG 32736 / 3841) (Rhizobium leguminosarum bv. viciae)).